A 403-amino-acid polypeptide reads, in one-letter code: L-cysteine:1D-myo-inositol 2-amino-2-deoxy-alpha-D-glucopyranoside ligase (403 aa).

Cysteine 43 is a binding site for Zn(2+). L-cysteinyl-5'-AMP contacts are provided by residues 43–46 (CGIT), threonine 58, and 81–83 (NTT). The short motif at 45 to 55 (ITPYDATHLGH) is the 'HIGH' region element. The short motif at 183–188 (ERGGDP) is the 'ERGGDP' region element. Tryptophan 223 is a binding site for L-cysteinyl-5'-AMP. Cysteine 227 is a Zn(2+) binding site. 245–247 (GSD) is a binding site for L-cysteinyl-5'-AMP. Histidine 252 lines the Zn(2+) pocket. Residue valine 279 coordinates L-cysteinyl-5'-AMP. Positions 285 to 289 (KMSKS) match the 'KMSKS' region motif.

It belongs to the class-I aminoacyl-tRNA synthetase family. MshC subfamily. Monomer. The cofactor is Zn(2+).

The enzyme catalyses 1D-myo-inositol 2-amino-2-deoxy-alpha-D-glucopyranoside + L-cysteine + ATP = 1D-myo-inositol 2-(L-cysteinylamino)-2-deoxy-alpha-D-glucopyranoside + AMP + diphosphate + H(+). In terms of biological role, catalyzes the ATP-dependent condensation of GlcN-Ins and L-cysteine to form L-Cys-GlcN-Ins. The sequence is that of L-cysteine:1D-myo-inositol 2-amino-2-deoxy-alpha-D-glucopyranoside ligase from Thermobispora bispora (strain ATCC 19993 / DSM 43833 / CBS 139.67 / JCM 10125 / KCTC 9307 / NBRC 14880 / R51).